The sequence spans 301 residues: D-alanine--D-alanine ligase A (301 aa).

In terms of domain architecture, ATP-grasp spans 96–290 (KKILRYEGVE…YSKLLDMIIE (195 aa)). Position 123 to 178 (123 to 178 (LDKLGFPLVVKPNSGGSSVGVKIVYNKNELISMLETVFEWDSEVVIEKYIKGDEIT)) interacts with ATP. Mg(2+)-binding residues include Asp245, Glu257, and Asn259.

It belongs to the D-alanine--D-alanine ligase family. Requires Mg(2+) as cofactor. Mn(2+) is required as a cofactor.

The protein localises to the cytoplasm. The catalysed reaction is 2 D-alanine + ATP = D-alanyl-D-alanine + ADP + phosphate + H(+). It participates in cell wall biogenesis; peptidoglycan biosynthesis. In terms of biological role, cell wall formation. The protein is D-alanine--D-alanine ligase A of Bacillus cereus (strain ATCC 14579 / DSM 31 / CCUG 7414 / JCM 2152 / NBRC 15305 / NCIMB 9373 / NCTC 2599 / NRRL B-3711).